The following is a 225-amino-acid chain: Biosynthetic peptidoglycan transglycosylase (225 aa).

Residues 7 to 27 form a helical membrane-spanning segment; it reads SFLFKMVLILLIAPIVLVGVV.

Belongs to the glycosyltransferase 51 family.

The protein localises to the cell inner membrane. The catalysed reaction is [GlcNAc-(1-&gt;4)-Mur2Ac(oyl-L-Ala-gamma-D-Glu-L-Lys-D-Ala-D-Ala)](n)-di-trans,octa-cis-undecaprenyl diphosphate + beta-D-GlcNAc-(1-&gt;4)-Mur2Ac(oyl-L-Ala-gamma-D-Glu-L-Lys-D-Ala-D-Ala)-di-trans,octa-cis-undecaprenyl diphosphate = [GlcNAc-(1-&gt;4)-Mur2Ac(oyl-L-Ala-gamma-D-Glu-L-Lys-D-Ala-D-Ala)](n+1)-di-trans,octa-cis-undecaprenyl diphosphate + di-trans,octa-cis-undecaprenyl diphosphate + H(+). The protein operates within cell wall biogenesis; peptidoglycan biosynthesis. Peptidoglycan polymerase that catalyzes glycan chain elongation from lipid-linked precursors. The chain is Biosynthetic peptidoglycan transglycosylase from Vibrio parahaemolyticus serotype O3:K6 (strain RIMD 2210633).